We begin with the raw amino-acid sequence, 699 residues long: Auxin response factor 1 (699 aa).

The segment at residues 122-224 (FCKILTPSDT…EQRVGVRRLV (103 aa)) is a DNA-binding region (TF-B3). Disordered stretches follow at residues 539-565 (TTTD…DSGQ) and 680-699 (EPHP…KTGF). The PB1 domain occupies 595–684 (RTRIKVQMHG…DEKKIEPHPK (90 aa)). The span at 687–699 (SSANPEQDQKTGF) shows a compositional bias: polar residues.

It belongs to the ARF family. Homodimers and heterodimers. In terms of tissue distribution, expressed in roots, culms, leaves and young panicles.

It is found in the nucleus. Auxin response factors (ARFs) are transcriptional factors that bind specifically to the DNA sequence 5'-TGTCTC-3' found in the auxin-responsive promoter elements (AuxREs). This is Auxin response factor 1 (ARF1) from Oryza sativa subsp. japonica (Rice).